Here is a 131-residue protein sequence, read N- to C-terminus: Translation initiation factor 5A (131 aa).

Lys37 carries the post-translational modification Hypusine.

Belongs to the eIF-5A family.

It is found in the cytoplasm. Functions by promoting the formation of the first peptide bond. The sequence is that of Translation initiation factor 5A (eIF5A) from Methanococcus vannielii (strain ATCC 35089 / DSM 1224 / JCM 13029 / OCM 148 / SB).